Consider the following 299-residue polypeptide: Zeta-sarcoglycan (299 aa).

Residues 1–37 (MTREQYILATQQNNLPRTENAQLYPVGIYGWRKRCLY) lie on the Cytoplasmic side of the membrane. The chain crosses the membrane as a helical; Signal-anchor for type II membrane protein span at residues 38-58 (FFVLLLLVTMIVNLAMTIWIL). The Extracellular segment spans residues 59–299 (KVMNFTVDGM…QSSSNICLWS (241 aa)). N62 and N110 each carry an N-linked (GlcNAc...) asparagine glycan. Residues C273 and C289 are joined by a disulfide bond.

It belongs to the sarcoglycan beta/delta/gamma/zeta family.

It localises to the cell membrane. The protein localises to the sarcolemma. It is found in the cytoplasm. The protein resides in the cytoskeleton. In terms of biological role, component of the sarcoglycan complex, a subcomplex of the dystrophin-glycoprotein complex which forms a link between the F-actin cytoskeleton and the extracellular matrix. May play a role in the maintenance of striated muscle membrane stability. This is Zeta-sarcoglycan (SGCZ) from Homo sapiens (Human).